Here is a 443-residue protein sequence, read N- to C-terminus: Glutamate--tRNA ligase 1 (443 aa).

Residues 8 to 18 (PSPTGRLHVGN) carry the 'HIGH' region motif. Positions 239-243 (KLSKR) match the 'KMSKS' region motif. K242 is an ATP binding site.

The protein belongs to the class-I aminoacyl-tRNA synthetase family. Glutamate--tRNA ligase type 1 subfamily. As to quaternary structure, monomer.

The protein resides in the cytoplasm. The enzyme catalyses tRNA(Glu) + L-glutamate + ATP = L-glutamyl-tRNA(Glu) + AMP + diphosphate. Functionally, catalyzes the attachment of glutamate to tRNA(Glu) in a two-step reaction: glutamate is first activated by ATP to form Glu-AMP and then transferred to the acceptor end of tRNA(Glu). The protein is Glutamate--tRNA ligase 1 of Rhizorhabdus wittichii (strain DSM 6014 / CCUG 31198 / JCM 15750 / NBRC 105917 / EY 4224 / RW1) (Sphingomonas wittichii).